Consider the following 515-residue polypeptide: UPF0053 protein BUsg_314 (515 aa).

The next 7 membrane-spanning stretches (helical) occupy residues 14 to 34 (LTLV…VAIL), 49 to 69 (IGLG…SWVV), 79 to 99 (NFFS…FLLF), 125 to 145 (FWAV…DAII), 150 to 170 (MVNQ…LMLL), 185 to 205 (VVVL…AEAL), and 207 to 227 (FYIP…IEIF). CBS domains lie at 309–368 (MTPR…NIDV) and 372–432 (ASQI…DADE).

This sequence belongs to the UPF0053 family.

It is found in the cell membrane. In Buchnera aphidicola subsp. Schizaphis graminum (strain Sg), this protein is UPF0053 protein BUsg_314.